Reading from the N-terminus, the 317-residue chain is Aspartate carbamoyltransferase catalytic subunit (317 aa).

2 residues coordinate carbamoyl phosphate: R64 and T65. Residue K92 participates in L-aspartate binding. Positions 114, 144, and 147 each coordinate carbamoyl phosphate. R177 and R232 together coordinate L-aspartate. Residues G273 and P274 each contribute to the carbamoyl phosphate site.

Belongs to the aspartate/ornithine carbamoyltransferase superfamily. ATCase family. Heterododecamer (2C3:3R2) of six catalytic PyrB chains organized as two trimers (C3), and six regulatory PyrI chains organized as three dimers (R2).

It carries out the reaction carbamoyl phosphate + L-aspartate = N-carbamoyl-L-aspartate + phosphate + H(+). It participates in pyrimidine metabolism; UMP biosynthesis via de novo pathway; (S)-dihydroorotate from bicarbonate: step 2/3. Catalyzes the condensation of carbamoyl phosphate and aspartate to form carbamoyl aspartate and inorganic phosphate, the committed step in the de novo pyrimidine nucleotide biosynthesis pathway. This Thiobacillus denitrificans (strain ATCC 25259 / T1) protein is Aspartate carbamoyltransferase catalytic subunit.